Consider the following 34-residue polypeptide: Leader peptide SpeFL (34 aa).

The Ornithine recognition loop signature appears at 10–16 (HIRRTTH). Residue R13 participates in L-ornithine binding.

This sequence belongs to the speF operon leader peptide family. As to quaternary structure, binds ornithine in stalled 70S ribosomes, blocking the upper two-thirds of the exit tunnel. Contacts 23S rRNA and ribosomal proteins L4 and L22.

A small protein (arrest peptide) encoded upstream of inducible ornithine carboxylase gene (speF) that controls expression of downstream genes (speF and potE) by transcriptional and translational attenuation. Its expression controls transcription and translation of downstream SpeF; translation pausing at low Arg levels on this mRNA prevents premature Rho-dependent transcription termination of speF and also enhances SprF translation by preventing sequestration of its ribosome-binding site. In the presence of high Arg levels translation of this protein allows the formation of an speF mRNA structure that is degraded by RNase G. The polypeptide is Leader peptide SpeFL (Salmonella typhimurium (strain SL1344)).